Here is a 186-residue protein sequence, read N- to C-terminus: MGLLDRLSVLLGLKKKEVHVLCLGLDNSGKTTIINKLKPSNAQSQNILPTIGFSIEKFKSSSLSFTVFDMSGQGRYRNLWEHYYKEGQAIIFVIDSSDRLRMVVAKEELDTLLNHPDIKHRRIPILFFANKMDLRDAVTSVKVSQLLCLENIKDKPWHICASDAIKGEGLQEGVDWLQDQIQTVKT.

The N-myristoyl glycine moiety is linked to residue Gly-2. Residues 24–31 (GLDNSGKT), Thr-50, 69–73 (DMSGQ), Gly-72, 130–133 (NKMD), and Ala-164 each bind GTP. The Mg(2+) site is built by Thr-31 and Thr-50.

It belongs to the small GTPase superfamily. Arf family. As to quaternary structure, interacts with SEC61B, ARL6IP1, ARL6IP2, ARL6IP3, ARL6IP4 ARL6IP5 and ARL6IP6. Interacts (GTP-bound form) with the BBSome a complex that contains BBS1, BBS2, BBS4, BBS5, BBS7, BBS8/TTC8, BBS9 and BBIP10. Interacts (GTP-free form) with IFT27.

It is found in the cell projection. Its subcellular location is the cilium membrane. The protein localises to the cytoplasm. It localises to the cytoskeleton. The protein resides in the cilium axoneme. It is found in the cilium basal body. Involved in membrane protein trafficking at the base of the ciliary organelle. Mediates recruitment onto plasma membrane of the BBSome complex which would constitute a coat complex required for sorting of specific membrane proteins to the primary cilia. Together with BBS1, is necessary for correct trafficking of PKD1 to primary cilia. Together with the BBSome complex and LTZL1, controls SMO ciliary trafficking and contributes to the sonic hedgehog (SHH) pathway regulation. May regulate cilia assembly and disassembly and subsequent ciliary signaling events such as the Wnt signaling cascade. Isoform 2 may be required for proper retinal function and organization. The polypeptide is ADP-ribosylation factor-like protein 6 (ARL6) (Homo sapiens (Human)).